Consider the following 364-residue polypeptide: Dual-specificity RNA methyltransferase RlmN (364 aa).

Glu93 (proton acceptor) is an active-site residue. Residues 99–337 enclose the Radical SAM core domain; the sequence is EDDRGTLCIS…ATIRKTRGDD (239 aa). An intrachain disulfide couples Cys106 to Cys342. [4Fe-4S] cluster is bound by residues Cys113, Cys117, and Cys120. Residues 167–168, Ser199, 221–223, and Asn299 contribute to the S-adenosyl-L-methionine site; these read GE and SLH. Cys342 acts as the S-methylcysteine intermediate in catalysis.

Belongs to the radical SAM superfamily. RlmN family. [4Fe-4S] cluster serves as cofactor.

The protein resides in the cytoplasm. It carries out the reaction adenosine(2503) in 23S rRNA + 2 reduced [2Fe-2S]-[ferredoxin] + 2 S-adenosyl-L-methionine = 2-methyladenosine(2503) in 23S rRNA + 5'-deoxyadenosine + L-methionine + 2 oxidized [2Fe-2S]-[ferredoxin] + S-adenosyl-L-homocysteine. The enzyme catalyses adenosine(37) in tRNA + 2 reduced [2Fe-2S]-[ferredoxin] + 2 S-adenosyl-L-methionine = 2-methyladenosine(37) in tRNA + 5'-deoxyadenosine + L-methionine + 2 oxidized [2Fe-2S]-[ferredoxin] + S-adenosyl-L-homocysteine. In terms of biological role, specifically methylates position 2 of adenine 2503 in 23S rRNA and position 2 of adenine 37 in tRNAs. m2A2503 modification seems to play a crucial role in the proofreading step occurring at the peptidyl transferase center and thus would serve to optimize ribosomal fidelity. The chain is Dual-specificity RNA methyltransferase RlmN from Dichelobacter nodosus (strain VCS1703A).